A 422-amino-acid chain; its full sequence is Vitamin D3 receptor (422 aa).

A DNA-binding region (nuclear receptor) is located at residues 22-90; sequence PRICGVCGDK…RLKRCVDIGM (69 aa). Residues Cys25, Cys28, Cys42, Cys45, Cys61, Cys67, Cys77, and Cys80 each coordinate Zn(2+). 2 consecutive NR C4-type zinc fingers follow at residues 25–45 and 61–85; these read CGVC…CEGC and CPFN…LKRC. Residues 98–127 form a hinge region; the sequence is DEEVQRKRQMINKRKSEEALKESMRPKISD. The 291-residue stretch at 128-418 folds into the NR LBD domain; the sequence is EQQKMIDILL…LTPLMLEVFS (291 aa). A disordered region spans residues 170–191; the sequence is RSSSVHTQGSPSEDSDVFTSSP. Ser232 provides a ligand contact to calcitriol. Residues 241-259 are interaction with coactivator LXXLL motif; that stretch reads KMIPGFRDLIAEDQIALLK. Calcitriol contacts are provided by Arg269, Ser273, His300, and His392. Positions 411–419 match the 9aaTAD motif; that stretch reads PLMLEVFSD.

This sequence belongs to the nuclear hormone receptor family. NR1 subfamily. Homodimer in the absence of bound vitamin D3. Heterodimer with RXRA after vitamin D3 binding. As to expression, detected in all tissues examined. Highest level in small intestine and skin.

The protein resides in the nucleus. It localises to the cytoplasm. In terms of biological role, nuclear receptor for calcitriol, the active form of vitamin D3 which mediates the action of this vitamin on cells. Enters the nucleus upon vitamin D3 binding where it forms heterodimers with the retinoid X receptor/RXR. The VDR-RXR heterodimers bind to specific response elements on DNA and activate the transcription of vitamin D3-responsive target genes. Plays a central role in calcium homeostasis. Also functions as a receptor for the secondary bile acid lithocholic acid (LCA) and its metabolites. The chain is Vitamin D3 receptor (vdr) from Xenopus laevis (African clawed frog).